A 242-amino-acid chain; its full sequence is Platelet-derived growth factor subunit B (242 aa).

The first 20 residues, 1–20 (MNRCWALFLSLCCYLRLVSA), serve as a signal peptide directing secretion. Positions 21–81 (EGDPIPEELY…ELESLSRGRR (61 aa)) are cleaved as a propeptide — removed in mature form. An N-linked (GlcNAc...) asparagine glycan is attached at Asn63. Intrachain disulfides connect Cys97–Cys141, Cys130–Cys178, and Cys134–Cys180. The span at 219-232 (PPKGKHRKFKHTHD) shows a compositional bias: basic residues. Positions 219-242 (PPKGKHRKFKHTHDKKALKETLGA) are disordered. Residues 233–242 (KKALKETLGA) are compositionally biased toward basic and acidic residues.

It belongs to the PDGF/VEGF growth factor family. As to quaternary structure, antiparallel homodimer; disulfide-linked. Antiparallel heterodimer with PDGFA; disulfide-linked. The PDGFB homodimer interacts with PDGFRA and PDGFRB homodimers, and with heterodimers formed by PDGFRA and PDGFRB. The heterodimer composed of PDGFA and PDGFB interacts with PDGFRB homodimers, and with heterodimers formed by PDGFRA and PDGFRB. Interacts with XLKD1. Interacts with LRP1. Interacts with SORL1 (via the N-terminal ectodomain). Interacts with CD82; this interaction inhibits PDGFB-mediated signaling pathway.

Its subcellular location is the secreted. Its function is as follows. Growth factor that plays an essential role in the regulation of embryonic development, cell proliferation, cell migration, survival and chemotaxis. Potent mitogen for cells of mesenchymal origin. Required for normal proliferation and recruitment of pericytes and vascular smooth muscle cells in the central nervous system, skin, lung, heart and placenta. Required for normal blood vessel development, and for normal development of kidney glomeruli. Plays an important role in wound healing. Signaling is modulated by the formation of heterodimers with PDGFA. This is Platelet-derived growth factor subunit B (PDGFB) from Canis lupus familiaris (Dog).